The primary structure comprises 485 residues: Zinc finger protein 639 (485 aa).

Positions 1 to 14 (MNEYPKKRKRKTLH) are enriched in basic residues. Positions 1–20 (MNEYPKKRKRKTLHPSRYSD) are disordered. Ser-60 carries the post-translational modification Phosphoserine. A Glycyl lysine isopeptide (Lys-Gly) (interchain with G-Cter in SUMO2) cross-link involves residue Lys-76. Ser-88 carries the phosphoserine modification. Glycyl lysine isopeptide (Lys-Gly) (interchain with G-Cter in SUMO2) cross-links involve residues Lys-177, Lys-181, and Lys-226. 8 consecutive C2H2-type zinc fingers follow at residues 204 to 227 (YKCELCEFNSKYFSDLKQHMILKH), 233 to 255 (NVCRVCKESFSTNMLLIEHAKLH), 260 to 283 (YICKYCDYKTVIFENLSQHIADTH), 289 to 311 (YWCEQCDVQFSSSSELYLHFQEH), 374 to 397 (FVCQVCGFRSRLHTNVNRHVAIEH), 403 to 425 (HVCDDCGKGFSSMLEYCKHLNSH), 431 to 454 (YLCQYCEYSTGQIEDLKIHLDFKH), and 460 to 482 (HKCSDCLMRFGNERELISHLPVH). Positions 371–455 (KNFFVCQVCG…LKIHLDFKHS (85 aa)) are interaction with CTNNA2.

The protein belongs to the krueppel C2H2-type zinc-finger protein family. In terms of assembly, interacts with CTNNA2.

The protein localises to the nucleus. In terms of biological role, binds DNA and may function as a transcriptional repressor. The chain is Zinc finger protein 639 (ZNF639) from Bos taurus (Bovine).